Consider the following 307-residue polypeptide: Aspartate carbamoyltransferase catalytic subunit (307 aa).

Residues R54 and T55 each contribute to the carbamoyl phosphate site. Position 83 (K83) interacts with L-aspartate. Carbamoyl phosphate is bound by residues R104, H132, and Q135. Positions 165 and 228 each coordinate L-aspartate. L267 and P268 together coordinate carbamoyl phosphate.

Belongs to the aspartate/ornithine carbamoyltransferase superfamily. ATCase family. As to quaternary structure, heterododecamer (2C3:3R2) of six catalytic PyrB chains organized as two trimers (C3), and six regulatory PyrI chains organized as three dimers (R2).

The enzyme catalyses carbamoyl phosphate + L-aspartate = N-carbamoyl-L-aspartate + phosphate + H(+). It participates in pyrimidine metabolism; UMP biosynthesis via de novo pathway; (S)-dihydroorotate from bicarbonate: step 2/3. Functionally, catalyzes the condensation of carbamoyl phosphate and aspartate to form carbamoyl aspartate and inorganic phosphate, the committed step in the de novo pyrimidine nucleotide biosynthesis pathway. The chain is Aspartate carbamoyltransferase catalytic subunit from Clostridium botulinum (strain Okra / Type B1).